The chain runs to 291 residues: Prepilin leader peptidase/N-methyltransferase (291 aa).

Residues 14–34 (LYFSLVFLFSLMIGSFLNVVI) form a helical membrane-spanning segment. Residues C75, C78, C100, and C103 each coordinate Zn(2+). Transmembrane regions (helical) follow at residues 107-127 (ISARYPLVELLTALLSVVVAM), 131-151 (PGWGTLAALLLTWVLVALTFI), 162-182 (LTLPLLWGGLLFNLLGGYVPL), 186-206 (VIGAMAGYLVLWSLYWAFKLL), 232-252 (LPIVLLLSSLVGAIFGIGLIL), and 262-282 (IPFGPYLAIAGWIALLWGDSI).

It belongs to the peptidase A24 family. Requires Zn(2+) as cofactor.

It is found in the cell inner membrane. It carries out the reaction Typically cleaves a -Gly-|-Phe- bond to release an N-terminal, basic peptide of 5-8 residues from type IV prepilin, and then N-methylates the new N-terminal amino group, the methyl donor being S-adenosyl-L-methionine.. Functionally, plays an essential role in type IV pili and type II pseudopili formation by proteolytically removing the leader sequence from substrate proteins and subsequently monomethylating the alpha-amino group of the newly exposed N-terminal phenylalanine. The protein is Prepilin leader peptidase/N-methyltransferase (tapD) of Aeromonas salmonicida (strain A449).